A 620-amino-acid polypeptide reads, in one-letter code: Glutathione-regulated potassium-efflux system protein KefC (620 aa).

Helical transmembrane passes span 4-24 (HTLL…PIAV), 26-46 (LGLG…PWGL), 54-74 (SILH…GLEL), 90-110 (GALQ…FLGL), 114-134 (VAEL…MQAM), 149-169 (FAVL…IPLL), 178-198 (LGAF…VVVL), 218-238 (VFSA…EEVG), 270-290 (GLLL…GTLV), 294-314 (LRIL…LWLV), 327-347 (WFAV…GAAQ), and 359-379 (ALTL…VLLT). The RCK N-terminal domain maps to 399–518 (QPRVIVAGFG…AGVAMPERET (120 aa)). Positions 599–620 (QGTAEGKHSGEVADEPEVKPSI) are disordered.

The protein belongs to the monovalent cation:proton antiporter 2 (CPA2) transporter (TC 2.A.37) family. KefC subfamily. As to quaternary structure, homodimer. Interacts with the regulatory subunit KefF.

The protein resides in the cell inner membrane. Its function is as follows. Pore-forming subunit of a potassium efflux system that confers protection against electrophiles. Catalyzes K(+)/H(+) antiport. The protein is Glutathione-regulated potassium-efflux system protein KefC of Salmonella paratyphi B (strain ATCC BAA-1250 / SPB7).